A 357-amino-acid polypeptide reads, in one-letter code: Protein RecA (357 aa).

67-74 serves as a coordination point for ATP; that stretch reads GPESSGKT.

This sequence belongs to the RecA family.

Its subcellular location is the cytoplasm. Can catalyze the hydrolysis of ATP in the presence of single-stranded DNA, the ATP-dependent uptake of single-stranded DNA by duplex DNA, and the ATP-dependent hybridization of homologous single-stranded DNAs. It interacts with LexA causing its activation and leading to its autocatalytic cleavage. In Leifsonia xyli subsp. xyli (strain CTCB07), this protein is Protein RecA.